The chain runs to 268 residues: L-cystine-binding protein TcyA (268 aa).

An N-terminal signal peptide occupies residues 1–19 (MKKALLALFMVVSIAALAA). Cys-20 is lipidated: N-palmitoyl cysteine. Cys-20 is lipidated: S-diacylglycerol cysteine.

The protein belongs to the bacterial solute-binding protein 3 family. As to quaternary structure, the complex is composed of two ATP-binding proteins (TcyC), two transmembrane proteins (TcyB) and a solute-binding protein (TcyA).

The protein resides in the cell membrane. In terms of biological role, part of the ABC transporter complex TcyABC involved in L-cystine import. The polypeptide is L-cystine-binding protein TcyA (tcyA) (Bacillus subtilis (strain 168)).